The chain runs to 179 residues: Segregation and condensation protein B (179 aa).

This sequence belongs to the ScpB family. Homodimer. Homodimerization may be required to stabilize the binding of ScpA to the Smc head domains. Component of a cohesin-like complex composed of ScpA, ScpB and the Smc homodimer, in which ScpA and ScpB bind to the head domain of Smc. The presence of the three proteins is required for the association of the complex with DNA.

Its subcellular location is the cytoplasm. In terms of biological role, participates in chromosomal partition during cell division. May act via the formation of a condensin-like complex containing Smc and ScpA that pull DNA away from mid-cell into both cell halves. The protein is Segregation and condensation protein B of Staphylococcus haemolyticus (strain JCSC1435).